The following is a 1039-amino-acid chain: MNTQSKVYRTGEEIYDNLPCDSYFNMNAIRNLGIPTTFPTIGTFTLDSTTLGLQPQGQGPSPQQQQHQQQQQQQQQQHQQNMHHHQHQQQHMQQQQQQQQHQQQHQQQQHQQQQQHQQQQQQQQQHPTIGMFDANEVNDVIQNPPQIGVFQSNSVLTNGAGSGSSIFGSQSSNSSAAAADPSQTTRETGIIEKLLHSYGFIQCCERQARLFFHFSQFSGNIDHLKIGDPVEFEMTYDRRTGKPIASQVSKIAPEVVLSEERVTGTVTTELRTDSANNVLNSSETTGRISYENRGECFFLPYTKDDVEGNVNLRAGDKVSFQIATNQRGNLGACHIRLENPAQPVKYRGVVCSMKESFGFIERADVVKEIFFHFSEAEGNVELRPGDDVEFTIQTRSSASVPPQGREFACNITRLAPGSVIFEDVDSTVYKGQVLKSLDRNNPVRQNNDPLPGRIRYRALDYSEVEVPFGDKDQKGDFTLRHGDWVQFLLATDRRDQLQRATSIALLDETFKVSGEKREQGTIASLKEGFGFLRCVERQARLFFHFTEVLDTSREIDINDEVEFTVIQEPGLAYNNSRLQAIRIKHLPPNSVQFETLVASNIEGCVTREAPKSPIKSQDRVEGGVITYEHADVKKTIMYFLKDCEKPPRIGERVRFDIYMVKRNKECIAVNVQQVSLHQQQQQQQQQLHLNQSNAGANINQNDQLGGLSNGISSSSSNASLQNGYVMHGSPGGSTSSVGSNNPVHLDEFKMENNNHAGSDAGQVYRGFIAVMKENFGFIETLSHDEEVFFHFSNYMGNPNWLELGQEVEYTLARNGNTSVSGNCLPAENVRMLPKNSIPQPAVLETTHNGVVARPLRCINPDQQEYAGLIEILDELRTTVISQHEFGITSLVNKRDLLQKGDLVSFRIDESGRAACVNAVRQKKRATVDSIKGQFGFLNFEVEDGKKLFFHMSEVQGNTVALHPGDTVEFSVVTNQRNGKSSACNVLKINDRPDRLISRLKLNGDDTVPRLILIRAPKGPQGKGFSVLARHPRIPGNLVE.

Residues 49 to 62 (TTLGLQPQGQGPSP) show a composition bias toward polar residues. Disordered regions lie at residues 49-126 (TTLG…QQQH) and 165-184 (SIFGSQSSNSSAAAADPSQT). Composition is skewed to low complexity over residues 63–80 (QQQQHQQQQQQQQQQHQQ), 89–126 (QQHMQQQQQQQQHQQQHQQQQHQQQQQHQQQQQQQQQH), and 165–182 (SIFGSQSSNSSAAAADPS). A CSD 1 domain is found at 186–250 (RETGIIEKLL…GKPIASQVSK (65 aa)). Residues 261–337 (RVTGTVTTEL…GNLGACHIRL (77 aa)) form the CSD 2; degenerate domain. In terms of domain architecture, CSD 3 spans 345 to 413 (KYRGVVCSMK…GREFACNITR (69 aa)). Residues 428–503 (VYKGQVLKSL…RDQLQRATSI (76 aa)) form the CSD 4; degenerate domain. The CSD 5 domain occupies 517 to 585 (REQGTIASLK…SRLQAIRIKH (69 aa)). In terms of domain architecture, CSD 6; degenerate spans 593–673 (FETLVASNIE…KECIAVNVQQ (81 aa)). The interval 721-741 (QNGYVMHGSPGGSTSSVGSNN) is disordered. Low complexity predominate over residues 732-741 (GSTSSVGSNN). The 69-residue stretch at 763–831 (VYRGFIAVMK…NCLPAENVRM (69 aa)) folds into the CSD 7 domain. The 74-residue stretch at 846-919 (THNGVVARPL…SGRAACVNAV (74 aa)) folds into the CSD 8; degenerate domain. The 66-residue stretch at 922–987 (KKRATVDSIK…GKSSACNVLK (66 aa)) folds into the CSD 9 domain.

Belongs to the UNR family. Interacts with Sxl; cooperates with Sxl to prevent translation of msl-2 transcripts. Interacts with mle; promoting association between mle and roX2 non-coding RNA. Interacts (via CSD domain 7-9) with pAbp; promoting translation inhibition of msl-2 transcripts.

It is found in the cytoplasm. Functionally, RNA-binding protein that acts as a regulator of dosage compensation in both males and females. In males, acts as positive regulator of dosage compensation by promoting assembly of the MSL complex, a multiprotein complex that mediates X-chromosome dosage compensation. Promotes MSL complex assembly via association with roX1 and roX2 non-coding RNA components of the MSL complex, facilitating the interaction between non-coding RNAs and mle. In females, acts as an inhibitor of dosage compensation together with Sxl by preventing production of msl-2 protein, an essential component of the MSL complex. Specifically binds to the 3'-UTR of msl-2 transcripts, and cooperates with Sxl to prevent translation initiation of msl-2 transcripts. Mechanistically, Sxl and Unr inhibit translation initiation by preventing ribosome recruitment after pAbp-mediated recruitment of the eIF4F complex. This Drosophila melanogaster (Fruit fly) protein is RNA-binding protein Unr.